Here is a 334-residue protein sequence, read N- to C-terminus: F-box only protein 16 (334 aa).

The F-box domain occupies 86-132; sequence LDFTTKLPRVLSVYIFSFLDPRSLCRCAQVSWYWKSLAELDQLWMLK. Disordered stretches follow at residues 168-222 and 314-334; these read PKTP…WRSS and LEHL…QSQS. The segment covering 194–204 has biased composition (low complexity); the sequence is SPSLAFRSSSS. Basic and acidic residues predominate over residues 210-222; it reads NPGEKELPPWRSS. Residues 323 to 334 are compositionally biased toward low complexity; sequence LQSPSPRLQSQS.

In terms of assembly, part of a SCF (SKP1-cullin-F-box) protein ligase complex.

Its function is as follows. Probably recognizes and binds to some phosphorylated proteins and promotes their ubiquitination and degradation. This is F-box only protein 16 (Fbxo16) from Mus musculus (Mouse).